The following is a 142-amino-acid chain: MSYMLPHLHNGWQVDQAILSEEDRVVVIRFGHDWDPTCMKMDEVLYSIAEKVKNFAVIYLVDITEVPDFNKMYELYDPCTVMFFFRNKHIMIDLGTGNNNKINWAMEDKQEMVDIIETVYRGARKGRGLVVSPKDYSTKYRY.

Cys38 and Cys79 are oxidised to a cystine. Ser132 is modified (phosphoserine).

It belongs to the DIM1 family. Component of the precatalytic spliceosome (spliceosome B complex). Component of the U5 snRNP complex. Component of the U4/U6-U5 tri-snRNP complex. The U4/U6-U5 tri-snRNP complex is a building block of the precatalytic spliceosome (spliceosome B complex). The U4/U6-U5 tri-snRNP complex is composed of the U4, U6 and U5 snRNAs and at least PRPF3, PRPF4, PRPF6, PRPF8, PRPF31, SNRNP200, TXNL4A, SNRNP40, SNRPB, SNRPD1, SNRPD2, SNRPD3, SNRPE, SNRPF, SNRPG, DDX23, CD2BP2, PPIH, SNU13, EFTUD2, SART1 and USP39, plus LSM2, LSM3, LSM4, LSM5, LSM6, LSM7 and LSM8. Directly interacts with CD2BP2. Interacts with HNRPF, HNRPH2, NEDD9 and PQBP1. Interacts with ERBB4. In terms of processing, the disulfide bond seen in structures determined by X-ray crystallography and NMR is not essential for protein folding and function.

It is found in the nucleus. Plays a role in pre-mRNA splicing as component of the U5 snRNP and U4/U6-U5 tri-snRNP complexes that are involved in spliceosome assembly, and as component of the precatalytic spliceosome (spliceosome B complex). The sequence is that of Thioredoxin-like protein 4A (TXNL4A) from Homo sapiens (Human).